We begin with the raw amino-acid sequence, 315 residues long: Probable carboxylesterase 3 (315 aa).

Residue methionine 1 is modified to N-acetylmethionine. The Involved in the stabilization of the negatively charged intermediate by the formation of the oxyanion hole signature appears at 81–83 (HGG). Catalysis depends on residues serine 160, aspartate 258, and histidine 290.

Belongs to the 'GDXG' lipolytic enzyme family. As to expression, expressed in flowers and siliques.

It catalyses the reaction a carboxylic ester + H2O = an alcohol + a carboxylate + H(+). In terms of biological role, carboxylesterase acting on esters with varying acyl chain length. This Arabidopsis thaliana (Mouse-ear cress) protein is Probable carboxylesterase 3 (CXE3).